We begin with the raw amino-acid sequence, 393 residues long: Protein TsgA (393 aa).

12 helical membrane-spanning segments follow: residues 11–31 (WISFLSYALTGALVIVTGMVM), 51–71 (FLNAGILISIFLNAWLMEIVP), 78–98 (FGFLLMVLAVAGLMFSHSLAL), 101–121 (AAMFILGVVSGITMSIGTFLV), 134–154 (LLFTDSFFSMAGMIFPMIAAF), 162–182 (WYWVYACIGLVYVAIFILTFG), 206–226 (IGVLFLSVAALCYILGQLGFI), 245–265 (TLVSNFWMSYMVGMWAFSFIL), 273–293 (ILTVLAGLAAILMYVFNTGTP), 297–317 (AWSILALGFFSSAIYTTIITL), 332–352 (FVLTCGTIGTMLTFVVTGPIV), and 361–381 (LLTANGLYAVVFVMCFLLGFV).

This sequence belongs to the major facilitator superfamily. TsgA family.

It is found in the cell inner membrane. The sequence is that of Protein TsgA from Escherichia coli O139:H28 (strain E24377A / ETEC).